Consider the following 543-residue polypeptide: Protein lin-9 homolog (543 aa).

Residues 21–82 are disordered; it reads REGSLSNTLN…SRSPRRSQRV (62 aa). A compositionally biased stretch (polar residues) spans 24-55; sequence SLSNTLNEKNNLPKSQTTRGRSSYVSMETPTR. Residues 355–451 adopt a coiled-coil conformation; sequence IKKEHIKHLK…VLRQNNTLAS (97 aa).

Belongs to the lin-9 family. As to quaternary structure, component of the DREAM complex.

Its subcellular location is the nucleus. The protein is Protein lin-9 homolog (lin9) of Danio rerio (Zebrafish).